The primary structure comprises 190 residues: GTP cyclohydrolase 1 (190 aa).

Zn(2+) is bound by residues C79, H82, and C151.

This sequence belongs to the GTP cyclohydrolase I family. Toroid-shaped homodecamer, composed of two pentamers of five dimers.

It catalyses the reaction GTP + H2O = 7,8-dihydroneopterin 3'-triphosphate + formate + H(+). It functions in the pathway cofactor biosynthesis; 7,8-dihydroneopterin triphosphate biosynthesis; 7,8-dihydroneopterin triphosphate from GTP: step 1/1. This chain is GTP cyclohydrolase 1, found in Clostridioides difficile (strain 630) (Peptoclostridium difficile).